The chain runs to 315 residues: MATDLAMSAELPNSPLAIEYVNDFDLMKFEIKKEPPEADRYCHRLPPGSLSSTPISTPCSSVPSSPSFCAPSPGSQPGQNLVNGVNNNNNNSGNGNNNTQGSSGKPQMEDLYWIPNYQHHISPEALNLTPEDAVEALIGNAHHHHHHHHHQPYEGFRGQQYVGEDLSAATNGHHHPVHHHHHHHGHHAHARLEDRFSDEQLVSMTVRELNRQLRGFSKEEVIRLKQKRRTLKNRGYAQSCRYKRVQQRHMLESEKCTLQSQVEQLKQDVARLIKERDLYKEKYEKLASRAFNGGGNTRDPSSGNHVKTTSTDFFM.

A compositionally biased stretch (low complexity) spans 52–104 (STPISTPCSSVPSSPSFCAPSPGSQPGQNLVNGVNNNNNNSGNGNNNTQGSSG). 2 disordered regions span residues 52 to 108 (STPI…KPQM) and 169 to 191 (ATNGHHHPVHHHHHHHGHHAHAR). The segment covering 172 to 189 (GHHHPVHHHHHHHGHHAH) has biased composition (basic residues). The interval 223–248 (RLKQKRRTLKNRGYAQSCRYKRVQQR) is basic motif. Residues 223–286 (RLKQKRRTLK…DLYKEKYEKL (64 aa)) form the bZIP domain. Residues 229 to 243 (RTLKNRGYAQSCRYK) are interaction with DNA. Positions 251–272 (LESEKCTLQSQVEQLKQDVARL) are leucine-zipper. The disordered stretch occupies residues 290 to 315 (AFNGGGNTRDPSSGNHVKTTSTDFFM). Polar residues predominate over residues 298–315 (RDPSSGNHVKTTSTDFFM).

Belongs to the bZIP family. Maf subfamily.

The protein resides in the nucleus. Transcription factor, possibly involved in transcription regulation during lens development, including that of crystallin genes. Specifically binds to the alphaCE2 enhancer element of crystallin gene. In Danio rerio (Zebrafish), this protein is Transcription factor MafAa (mafaa).